The following is a 372-amino-acid chain: Neutral protease 2 homolog MGYG_06241 (372 aa).

An N-terminal signal peptide occupies residues 1–19 (MQFFTAIAAISALVAPALA). Residues 20–188 (LPTQELPQAP…THFAGTLNRR (169 aa)) constitute a propeptide that is removed on maturation. 2 disulfides stabilise this stretch: C195-C264 and C271-C289. H313 contributes to the Zn(2+) binding site. E314 is an active-site residue. Residues H317 and D328 each coordinate Zn(2+).

The protein belongs to the peptidase M35 family. Zn(2+) serves as cofactor.

It is found in the secreted. The catalysed reaction is Preferential cleavage of bonds with hydrophobic residues in P1'. Also 3-Asn-|-Gln-4 and 8-Gly-|-Ser-9 bonds in insulin B chain.. Functionally, secreted metalloproteinase that allows assimilation of proteinaceous substrates. Shows high activities on basic nuclear substrates such as histone and protamine. May be involved in virulence. This is Neutral protease 2 homolog MGYG_06241 from Arthroderma gypseum (strain ATCC MYA-4604 / CBS 118893) (Microsporum gypseum).